The primary structure comprises 642 residues: MPVITLPDGSQRQFDRAVSPMDVALDIGPGLAKATIAGRVNGELVDASDLIENDAQLSIITAKDAEGIEIIRHSCAHLLGHAIKQLWPNTKMAIGPVIDNGFYYDVDLDHTLTQEDIDALEKRMHELAETNYDVIKKNVSWHEARETFVKRGENYKVSILDENISHDDKPGLYHHEEYVDMCRGPHVPNMRFCHHFKLMKIAGAYWRGDSNNKMLQRIYGTAWADKKALNAYLVRLEEAAKRDHRKIGKQLDLYHMQEEAPGMVFWHNDGWTIFRELETFVRSKLKEYQYQEVKGPFMMDRVLWEKTGHWDNYKDAMFTTSSENREYCIKPMNCPGHVQIFNQGLKSYRDLPLRMAEFGSCHRNEPSGALHGLMRVRGFTQDDAHIFCTEGQVRDEVNACIRMVYDMYSTFGFEKIVVKLSTRPEKRIGSDETWDRAEADLAVALEENNIPFEYQLGEGAFYGPKIEFTLYDCLDRAWQCGTVQLDFSLPQRLSASYVGEDNERQIPVMIHRAILGSIERFIGILTEEFAGFFPTWLAPVQVVVMNITDSQADYVKELTQKLQNAGIRVKADLRNEKIGFKIREHTLRRVPYMLVCGDKEVESGKVAVRTRRGKDLGSLDVNEVIEKLRLEIRSRSLQQLEV.

The TGS domain maps to 1 to 61; sequence MPVITLPDGS…ENDAQLSIIT (61 aa). A catalytic region spans residues 243-534; it reads DHRKIGKQLD…LTEEFAGFFP (292 aa). The Zn(2+) site is built by Cys334, His385, and His511.

The protein belongs to the class-II aminoacyl-tRNA synthetase family. As to quaternary structure, homodimer. The cofactor is Zn(2+).

It localises to the cytoplasm. The enzyme catalyses tRNA(Thr) + L-threonine + ATP = L-threonyl-tRNA(Thr) + AMP + diphosphate + H(+). Functionally, catalyzes the attachment of threonine to tRNA(Thr) in a two-step reaction: L-threonine is first activated by ATP to form Thr-AMP and then transferred to the acceptor end of tRNA(Thr). Also edits incorrectly charged L-seryl-tRNA(Thr). This Enterobacter sp. (strain 638) protein is Threonine--tRNA ligase.